Reading from the N-terminus, the 270-residue chain is Mediator of RNA polymerase II transcription subunit 4 (270 aa).

Residues 1-25 (MAAASSGEKEKERPGGGLGAAGGNS) are disordered. A2 is modified (N-acetylalanine). Coiled-coil stretches lie at residues 24–48 (NSTRERLLSALEDLEVLSRELIEML) and 90–131 (HHEM…AKEK). S32 bears the Phosphoserine mark. Positions 231–270 (MLPPNHSHDFLLEPPGHNKENEDDVEVMSTDSSSSSSDSD) are disordered. The span at 236-250 (HSHDFLLEPPGHNKE) shows a compositional bias: basic and acidic residues. Positions 259–270 (STDSSSSSSDSD) are enriched in low complexity.

Belongs to the Mediator complex subunit 4 family. Component of the Mediator complex, which is composed of MED1, MED4, MED6, MED7, MED8, MED9, MED10, MED11, MED12, MED13, MED13L, MED14, MED15, MED16, MED17, MED18, MED19, MED20, MED21, MED22, MED23, MED24, MED25, MED26, MED27, MED29, MED30, MED31, CCNC, CDK8 and CDC2L6/CDK11. The MED12, MED13, CCNC and CDK8 subunits form a distinct module termed the CDK8 module. Mediator containing the CDK8 module is less active than Mediator lacking this module in supporting transcriptional activation. Individual preparations of the Mediator complex lacking one or more distinct subunits have been variously termed ARC, CRSP, DRIP, PC2, SMCC and TRAP.

The protein resides in the nucleus. In terms of biological role, component of the Mediator complex, a coactivator involved in the regulated transcription of nearly all RNA polymerase II-dependent genes. Mediator functions as a bridge to convey information from gene-specific regulatory proteins to the basal RNA polymerase II transcription machinery. Mediator is recruited to promoters by direct interactions with regulatory proteins and serves as a scaffold for the assembly of a functional preinitiation complex with RNA polymerase II and the general transcription factors. This is Mediator of RNA polymerase II transcription subunit 4 (MED4) from Bos taurus (Bovine).